We begin with the raw amino-acid sequence, 345 residues long: Phosphoribosylformylglycinamidine cyclo-ligase (345 aa).

Belongs to the AIR synthase family.

The protein resides in the cytoplasm. The enzyme catalyses 2-formamido-N(1)-(5-O-phospho-beta-D-ribosyl)acetamidine + ATP = 5-amino-1-(5-phospho-beta-D-ribosyl)imidazole + ADP + phosphate + H(+). It participates in purine metabolism; IMP biosynthesis via de novo pathway; 5-amino-1-(5-phospho-D-ribosyl)imidazole from N(2)-formyl-N(1)-(5-phospho-D-ribosyl)glycinamide: step 2/2. In Escherichia coli O45:K1 (strain S88 / ExPEC), this protein is Phosphoribosylformylglycinamidine cyclo-ligase.